The sequence spans 598 residues: N-acetylmuramoyl-L-alanine amidase (598 aa).

The first 31 residues, 1–31, serve as a signal peptide directing secretion; it reads MSPGNWKTTMVVRGILLILYGLLLQPEPGTA. Disordered regions lie at residues 172-194 and 212-233; these read SSAH…SPNV and STGV…KAKS. Position 261 is a phosphoserine (serine 261). An N-linked (GlcNAc...) asparagine glycan is attached at asparagine 353. Residues 428-554 form the N-acetylmuramoyl-L-alanine amidase domain; it reads FLYIHHTYVP…RQLVRTDCPG (127 aa). Histidine 432 lines the Zn(2+) pocket. Cysteine 441 and cysteine 447 are disulfide-bonded. The N-linked (GlcNAc...) asparagine glycan is linked to asparagine 507. Zn(2+)-binding residues include histidine 544 and cysteine 552.

It belongs to the N-acetylmuramoyl-L-alanine amidase 2 family. Requires Zn(2+) as cofactor.

It is found in the secreted. Its subcellular location is the membrane. It catalyses the reaction Hydrolyzes the link between N-acetylmuramoyl residues and L-amino acid residues in certain cell-wall glycopeptides.. Its function is as follows. May play a scavenger role by digesting biologically active peptidoglycan (PGN) into biologically inactive fragments. Has no direct bacteriolytic activity. The chain is N-acetylmuramoyl-L-alanine amidase (PGLYRP2) from Sus scrofa (Pig).